A 798-amino-acid chain; its full sequence is uncharacterized protein (798 aa).

The tract at residues 432–573 (KLTDNLSNKS…KNKAYRGRRV (142 aa)) is disordered. Composition is skewed to low complexity over residues 438 to 449 (SNKSSNDNTSET), 456 to 465 (RSSNSRNSDN), 473 to 487 (SKTQSSDSSKSSRIP), and 495 to 510 (STNSVVSVGSTGSDVY). Positions 519-529 (PSRSTYKSRTI) are enriched in polar residues. A compositionally biased stretch (low complexity) spans 535–547 (ESSPVSSRTSSPV). Residues 548 to 562 (DDSRLKQSRISEDKP) are compositionally biased toward basic and acidic residues. Residues 563-572 (RKNKAYRGRR) show a composition bias toward basic residues.

The protein resides in the virion. This is an uncharacterized protein from Acanthamoeba polyphaga (Amoeba).